A 96-amino-acid chain; its full sequence is Co-chaperonin GroES (96 aa).

This sequence belongs to the GroES chaperonin family. As to quaternary structure, heptamer of 7 subunits arranged in a ring. Interacts with the chaperonin GroEL.

It localises to the cytoplasm. In terms of biological role, together with the chaperonin GroEL, plays an essential role in assisting protein folding. The GroEL-GroES system forms a nano-cage that allows encapsulation of the non-native substrate proteins and provides a physical environment optimized to promote and accelerate protein folding. GroES binds to the apical surface of the GroEL ring, thereby capping the opening of the GroEL channel. The polypeptide is Co-chaperonin GroES (Herminiimonas arsenicoxydans).